We begin with the raw amino-acid sequence, 465 residues long: Ribulose bisphosphate carboxylase large chain (465 aa).

K4 carries the N6,N6,N6-trimethyllysine modification. Substrate-binding residues include N113 and T163. K165 (proton acceptor) is an active-site residue. K167 contacts substrate. Residues K191, D193, and E194 each coordinate Mg(2+). K191 is modified (N6-carboxylysine). H284 (proton acceptor) is an active-site residue. Positions 285, 317, and 369 each coordinate substrate.

It belongs to the RuBisCO large chain family. Type I subfamily. As to quaternary structure, heterohexadecamer of 8 large chains and 8 small chains; disulfide-linked. The disulfide link is formed within the large subunit homodimers. Mg(2+) is required as a cofactor. In terms of processing, the disulfide bond which can form in the large chain dimeric partners within the hexadecamer appears to be associated with oxidative stress and protein turnover.

It is found in the plastid. The protein localises to the chloroplast. It carries out the reaction 2 (2R)-3-phosphoglycerate + 2 H(+) = D-ribulose 1,5-bisphosphate + CO2 + H2O. The enzyme catalyses D-ribulose 1,5-bisphosphate + O2 = 2-phosphoglycolate + (2R)-3-phosphoglycerate + 2 H(+). In terms of biological role, ruBisCO catalyzes two reactions: the carboxylation of D-ribulose 1,5-bisphosphate, the primary event in carbon dioxide fixation, as well as the oxidative fragmentation of the pentose substrate in the photorespiration process. Both reactions occur simultaneously and in competition at the same active site. This chain is Ribulose bisphosphate carboxylase large chain, found in Senega cruciata (Cross-leaved milkwort).